Here is a 518-residue protein sequence, read N- to C-terminus: Anthranilate synthase component 1 (518 aa).

Residues serine 41 and 291 to 293 (PYM) each bind L-tryptophan. 328-329 (GS) contributes to the chorismate binding site. Residue glutamate 361 participates in Mg(2+) binding. Chorismate-binding positions include tyrosine 449, arginine 469, 483 to 485 (GCG), and glycine 485. A Mg(2+)-binding site is contributed by glutamate 498.

The protein belongs to the anthranilate synthase component I family. As to quaternary structure, heterotetramer consisting of two non-identical subunits: a beta subunit (TrpG) and a large alpha subunit (TrpE). The cofactor is Mg(2+).

The catalysed reaction is chorismate + L-glutamine = anthranilate + pyruvate + L-glutamate + H(+). It participates in amino-acid biosynthesis; L-tryptophan biosynthesis; L-tryptophan from chorismate: step 1/5. Feedback inhibited by tryptophan. Part of a heterotetrameric complex that catalyzes the two-step biosynthesis of anthranilate, an intermediate in the biosynthesis of L-tryptophan. In the first step, the glutamine-binding beta subunit (TrpG) of anthranilate synthase (AS) provides the glutamine amidotransferase activity which generates ammonia as a substrate that, along with chorismate, is used in the second step, catalyzed by the large alpha subunit of AS (TrpE) to produce anthranilate. In the absence of TrpG, TrpE can synthesize anthranilate directly from chorismate and high concentrations of ammonia. This chain is Anthranilate synthase component 1 (trpE), found in Haemophilus influenzae (strain ATCC 51907 / DSM 11121 / KW20 / Rd).